A 385-amino-acid polypeptide reads, in one-letter code: uncharacterized protein (385 aa).

The protein belongs to the phage portal family. HK97 subfamily.

This is an uncharacterized protein from Rickettsia bellii (strain RML369-C).